The chain runs to 789 residues: Zinc finger FYVE domain-containing protein 1 (789 aa).

The interval 416–788 is required for localization in the lipid droplets; sequence MAHSSFFPDE…LSVMTGKGPL (373 aa). FYVE-type zinc fingers lie at residues 598–659 and 715–775; these read NSQI…EARN and DHEI…KKPA. Zn(2+) contacts are provided by cysteine 604, cysteine 607, cysteine 620, cysteine 623, cysteine 628, cysteine 631, cysteine 651, cysteine 654, cysteine 721, cysteine 724, cysteine 737, cysteine 740, cysteine 745, cysteine 748, cysteine 767, and cysteine 770.

Interacts with RAB18 (in GTP-bound form). Interacts with BSCL2 in a RAB18-dependent manner. Interacts with ZW10.

It localises to the golgi apparatus. It is found in the golgi stack. Its subcellular location is the endoplasmic reticulum. The protein localises to the preautophagosomal structure. The protein resides in the lipid droplet. It localises to the mitochondrion. Functionally, plays a role in the formation of lipid droplets (LDs) which are storage organelles at the center of lipid and energy homeostasis. Regulates the morphology, size and distribution of LDs. Mediates the formation of endoplasmic reticulum-lipid droplets (ER-LD) contact sites by forming a complex with RAB18 and ZW10. Binds to phosphatidylinositol 3-phosphate (PtdIns3P) through FYVE-type zinc finger. This chain is Zinc finger FYVE domain-containing protein 1 (ZFYVE1), found in Pongo abelii (Sumatran orangutan).